The sequence spans 457 residues: Siroheme synthase (457 aa).

Positions 1–204 (MDHLPIFCQL…QDQQAVEETT (204 aa)) are precorrin-2 dehydrogenase /sirohydrochlorin ferrochelatase. NAD(+)-binding positions include 22-23 (DV) and 43-44 (LA). Ser-128 bears the Phosphoserine mark. The tract at residues 216–457 (GEVVLVGAGP…REKLNWFSNH (242 aa)) is uroporphyrinogen-III C-methyltransferase. Pro-225 contributes to the S-adenosyl-L-methionine binding site. Residue Asp-248 is the Proton acceptor of the active site. The active-site Proton donor is Lys-270. Residues 301–303 (GGD), Ile-306, 331–332 (TA), Met-382, and Gly-411 each bind S-adenosyl-L-methionine.

The protein in the N-terminal section; belongs to the precorrin-2 dehydrogenase / sirohydrochlorin ferrochelatase family. This sequence in the C-terminal section; belongs to the precorrin methyltransferase family.

It catalyses the reaction uroporphyrinogen III + 2 S-adenosyl-L-methionine = precorrin-2 + 2 S-adenosyl-L-homocysteine + H(+). The catalysed reaction is precorrin-2 + NAD(+) = sirohydrochlorin + NADH + 2 H(+). The enzyme catalyses siroheme + 2 H(+) = sirohydrochlorin + Fe(2+). It participates in cofactor biosynthesis; adenosylcobalamin biosynthesis; precorrin-2 from uroporphyrinogen III: step 1/1. Its pathway is cofactor biosynthesis; adenosylcobalamin biosynthesis; sirohydrochlorin from precorrin-2: step 1/1. It functions in the pathway porphyrin-containing compound metabolism; siroheme biosynthesis; precorrin-2 from uroporphyrinogen III: step 1/1. The protein operates within porphyrin-containing compound metabolism; siroheme biosynthesis; siroheme from sirohydrochlorin: step 1/1. It participates in porphyrin-containing compound metabolism; siroheme biosynthesis; sirohydrochlorin from precorrin-2: step 1/1. Functionally, multifunctional enzyme that catalyzes the SAM-dependent methylations of uroporphyrinogen III at position C-2 and C-7 to form precorrin-2 via precorrin-1. Then it catalyzes the NAD-dependent ring dehydrogenation of precorrin-2 to yield sirohydrochlorin. Finally, it catalyzes the ferrochelation of sirohydrochlorin to yield siroheme. In Enterobacter sp. (strain 638), this protein is Siroheme synthase.